A 380-amino-acid chain; its full sequence is MLIVADENIPLLDAFFQGFGEIRRYPGRSLDAASVKDADILLVRSVTKVDRQLLEGSRVRFVGTCTIGTDHLDLDYFAQASISWSSAPGCNARGVVDYVLGSLLTLAELDGVALAERVYGVVGAGEVGGRLVRVLHGLGWKVLVCDPLRQAAEGGDYVSLETIVQQCDVISLHTPLQRGGEHPTWHLLGPAQLAQLRPGAWLVNASRGPVVDNIALRELLLDREDVHAVLDVWEGEPQVDLQLADLCTLASPHIAGYSLDGRQRGTAQIYQALCRFLGVDEQVQLADLLPRPALAQVELDASTDPAWALATLCRAVYDPRRDDADFRRSLSDDPQLQRAAFDQLRKHYPPRREIEGLAVRLRGESPQLAQLVSALGGALV.

Residues Ser-45 and Thr-66 each contribute to the substrate site. NAD(+)-binding positions include Asp-146, Thr-174, Ala-205–Arg-207, and Asp-231. Arg-207 is a catalytic residue. Glu-236 is an active-site residue. Catalysis depends on His-253, which acts as the Proton donor. NAD(+) is bound at residue Gly-256. Tyr-257 contacts substrate.

This sequence belongs to the D-isomer specific 2-hydroxyacid dehydrogenase family. PdxB subfamily. As to quaternary structure, homodimer.

The protein localises to the cytoplasm. It catalyses the reaction 4-phospho-D-erythronate + NAD(+) = (R)-3-hydroxy-2-oxo-4-phosphooxybutanoate + NADH + H(+). Its pathway is cofactor biosynthesis; pyridoxine 5'-phosphate biosynthesis; pyridoxine 5'-phosphate from D-erythrose 4-phosphate: step 2/5. Catalyzes the oxidation of erythronate-4-phosphate to 3-hydroxy-2-oxo-4-phosphonooxybutanoate. The chain is Erythronate-4-phosphate dehydrogenase from Pseudomonas putida (strain GB-1).